A 387-amino-acid polypeptide reads, in one-letter code: Peroxisomal membrane protein LPX1 (387 aa).

The peroxisomal targeting signal type 1 stretch occupies residues 385 to 387 (QKL).

It localises to the peroxisome matrix. Functionally, has acyl esterase, lipase and phospholipase A activity. In Saccharomyces cerevisiae (strain ATCC 204508 / S288c) (Baker's yeast), this protein is Peroxisomal membrane protein LPX1 (LPX1).